The sequence spans 185 residues: Male-enhanced antigen 1 (185 aa).

Disordered stretches follow at residues 1–90 (MGPE…VGDG) and 104–134 (GLHLPDPPLESEDEDEEGATALNNHSSIPMD). 2 stretches are compositionally biased toward acidic residues: residues 50 to 60 (SSEEPEEEQEE) and 112 to 121 (LESEDEDEEG). Serine 114 is modified (phosphoserine).

Highly expressed in testis.

Its function is as follows. May play an important role in spermatogenesis and/or testis development. The sequence is that of Male-enhanced antigen 1 (MEA1) from Homo sapiens (Human).